The chain runs to 169 residues: Transmembrane protein B169L (169 aa).

The next 2 membrane-spanning stretches (helical) occupy residues 28–48 (NPFI…FAIC) and 60–80 (TAIY…YVLN). N-linked (GlcNAc...) asparagine; by host glycosylation occurs at Asn88. Positions 107 to 169 (DEIIPPISPP…EVIMPSQYNN (63 aa)) are disordered. Residues 144–154 (SKPASSADSKP) show a composition bias toward low complexity.

This sequence belongs to the asfivirus B169L family.

Its subcellular location is the host membrane. It localises to the virion. The polypeptide is Transmembrane protein B169L (Ornithodoros (relapsing fever ticks)).